We begin with the raw amino-acid sequence, 498 residues long: ATP synthase subunit beta, chloroplastic (498 aa).

172-179 (GGAGVGKT) serves as a coordination point for ATP.

Belongs to the ATPase alpha/beta chains family. In terms of assembly, F-type ATPases have 2 components, CF(1) - the catalytic core - and CF(0) - the membrane proton channel. CF(1) has five subunits: alpha(3), beta(3), gamma(1), delta(1), epsilon(1). CF(0) has four main subunits: a(1), b(1), b'(1) and c(9-12).

Its subcellular location is the plastid. The protein localises to the chloroplast thylakoid membrane. The catalysed reaction is ATP + H2O + 4 H(+)(in) = ADP + phosphate + 5 H(+)(out). Produces ATP from ADP in the presence of a proton gradient across the membrane. The catalytic sites are hosted primarily by the beta subunits. The polypeptide is ATP synthase subunit beta, chloroplastic (Sorghum bicolor (Sorghum)).